A 335-amino-acid polypeptide reads, in one-letter code: Casein kinase I (335 aa).

The region spanning tyrosine 9–phenylalanine 278 is the Protein kinase domain. ATP contacts are provided by residues isoleucine 15 to isoleucine 23 and lysine 38. Aspartate 128 functions as the Proton acceptor in the catalytic mechanism. The tract at residues arginine 304–proline 335 is disordered. Over residues serine 305 to glutamine 316 the composition is skewed to polar residues. Positions tryptophan 317–leucine 327 are enriched in basic and acidic residues.

Belongs to the protein kinase superfamily. CK1 Ser/Thr protein kinase family. Casein kinase I subfamily.

It carries out the reaction L-seryl-[protein] + ATP = O-phospho-L-seryl-[protein] + ADP + H(+). The enzyme catalyses L-threonyl-[protein] + ATP = O-phospho-L-threonyl-[protein] + ADP + H(+). Its function is as follows. Casein kinases are operationally defined by their preferential utilization of acidic proteins such as caseins as substrates. It can phosphorylate a large number of proteins. This chain is Casein kinase I, found in Eimeria tenella (Coccidian parasite).